Reading from the N-terminus, the 1085-residue chain is DNA-directed RNA polymerase subunit beta (1085 aa).

Belongs to the RNA polymerase beta chain family. In plastids the minimal PEP RNA polymerase catalytic core is composed of four subunits: alpha, beta, beta', and beta''. When a (nuclear-encoded) sigma factor is associated with the core the holoenzyme is formed, which can initiate transcription.

The protein resides in the plastid. The protein localises to the chloroplast. It carries out the reaction RNA(n) + a ribonucleoside 5'-triphosphate = RNA(n+1) + diphosphate. DNA-dependent RNA polymerase catalyzes the transcription of DNA into RNA using the four ribonucleoside triphosphates as substrates. This is DNA-directed RNA polymerase subunit beta from Physcomitrium patens (Spreading-leaved earth moss).